The primary structure comprises 152 residues: Melatonin receptor type 1B (152 aa).

Over 1–12 (HSFVYEKLFSLW) the chain is Cytoplasmic. Residues 13 to 33 (NTILYVCLIWTLTVVATVPNF) traverse the membrane as a helical segment. The Extracellular portion of the chain corresponds to 34 to 57 (FVGSLEYDPRIYSCTFVQTVSSSY). Residues 58-78 (TITVVVIHFILPITVVTFCYL) traverse the membrane as a helical segment. Over 79–110 (RIWILVIQVRRKVKSEFKPRMKQSDFRNFLTM) the chain is Cytoplasmic. The chain crosses the membrane as a helical span at residues 111–131 (FVVFVIFAFCWAPLNFIGLAV). Residues 132-144 (SINPTEVAPKIPE) lie on the Extracellular side of the membrane. Residues 145 to 152 (WLFVVSYF) form a helical membrane-spanning segment.

The protein belongs to the G-protein coupled receptor 1 family.

Its subcellular location is the cell membrane. Functionally, high affinity receptor for melatonin. The activity of this receptor is mediated by pertussis toxin sensitive G proteins that inhibits adenylate cyclase activity. The sequence is that of Melatonin receptor type 1B (mtnr1b) from Xenopus laevis (African clawed frog).